The sequence spans 1883 residues: Nuclear pore complex protein Nup153 (1883 aa).

Residues Met1–Lys17 are compositionally biased toward basic and acidic residues. Disordered stretches follow at residues Met1–Gly57, Ser70–Met116, Ala176–Glu227, Arg400–Ser439, Arg498–Tyr518, Pro580–Ser604, Met627–Arg657, Thr694–Ile769, and Val791–Thr812. Over residues Glu29–Ser41 the composition is skewed to acidic residues. Positions Gly73–Asn101 are enriched in polar residues. Positions Thr105 to Ile115 are enriched in basic residues. Acidic residues predominate over residues Gly182–Glu209. A compositionally biased stretch (basic and acidic residues) spans Asn420 to Arg433. Residues Arg498 to Ser515 are compositionally biased toward low complexity. A compositionally biased stretch (polar residues) spans Asp582–Val591. Basic and acidic residues predominate over residues Met627–Ser636. 2 stretches are compositionally biased toward polar residues: residues Ser637–Arg657 and Thr694–Val706. Residues His736 to Thr748 show a composition bias toward basic residues. Residues Ser802–Thr812 show a composition bias toward low complexity. 5 consecutive RanBP2-type zinc fingers follow at residues Ser903–Val932, Lys962–Thr993, Lys1009–Gly1038, Lys1067–Ser1097, and Lys1126–Gln1155. The Zn(2+) site is built by Cys909, Cys912, Cys923, Cys926, Cys970, Cys973, Cys984, Cys987, Cys1015, Cys1018, Cys1029, Cys1032, Cys1074, Cys1077, Cys1088, and Cys1091. Residues Ser1173–Ser1197 are disordered. The segment at Lys1237 to Glu1266 adopts a RanBP2-type 6 zinc-finger fold. Tandem repeats lie at residues Phe1287–Gly1288, Phe1315–Gly1316, Phe1317–Gly1318, Phe1340–Gly1341, Phe1353–Gly1354, Phe1415–Gly1416, Phe1469–Gly1470, Phe1511–Gly1512, Phe1528–Gly1529, Phe1548–Gly1549, Phe1586–Gly1587, Phe1599–Gly1600, Phe1613–Gly1614, Phe1647–Gly1648, Phe1653–Gly1654, Phe1672–Gly1673, Phe1694–Gly1695, Phe1724–Gly1725, Phe1737–Gly1738, Phe1748–Gly1749, Phe1768–Gly1769, and Phe1785–Gly1786. A 22 X 2 AA repeats of F-G region spans residues Phe1287–Gly1786. Positions Glu1301–Gly1323 are enriched in polar residues. The segment at Glu1301–Lys1331 is disordered. Positions Ser1449–Ser1473 are disordered. Residues Thr1597–Ser1616 are disordered. The segment at Asn1855–Arg1883 is disordered. A compositionally biased stretch (basic residues) spans Ala1869–Arg1883.

The protein belongs to the NUP153 family. As to quaternary structure, part of the nuclear pore complex (NPC). Associates with male-specific lethal (MSL) histone acetyltransferase complex. The cofactor is Zn(2+). As to expression, expressed in adult male accessory glands (at protein level).

It localises to the nucleus. It is found in the nucleus membrane. The protein resides in the nuclear pore complex. Its subcellular location is the chromosome. The protein localises to the cytoplasm. It localises to the cytoskeleton. It is found in the spindle. Functionally, component of the nuclear pore complex (NPC), a complex required for the trafficking across the nuclear envelope. Functions as a scaffolding element in the nuclear phase of the NPC. Essential for the nuclear import of nuclear localization signal (NLS)-containing proteins in a Importin alpha/Importin beta receptor-dependent manner. Required for nuclear import of Mad. Plays a role in chromosomal organization and gene expression regulation; stimulates transcription by promoting the formation of an open chromatin environment. Binds chromatin to nucleoporin-associated regions (NARs) that define transcriptionally active regions of the genome. Associates with extended chromosomal regions that alternate between domains of high density binding with those of low occupancy. Preferentially binds to NARs of the male X chromosome. In males, together with Mgtor, required for the localization of the male-specific lethal (MSL) histone acetyltransferase complex to the X chromosome and therefore for the transcription of dosage compensation genes. May play a role in double strand break DNA repair. The chain is Nuclear pore complex protein Nup153 (Nup153) from Drosophila melanogaster (Fruit fly).